The sequence spans 240 residues: Terpene cyclase cdmG (240 aa).

Helical transmembrane passes span 16–36, 48–68, 78–98, 112–132, 134–154, and 167–187; these read YASIVDAATLVQGFLWALNYG, YGMAIFPLCCNYAWELVYTVI, IIMTTWLILNSIMMGFTIKFA, IPFIFLAGVAAFVIAQLALAA, VGPGLAMNWVAALCYLLLTIG, and GVSYTMWLSRFVGTYVGVICV. Residue N197 is glycosylated (N-linked (GlcNAc...) asparagine). A helical transmembrane segment spans residues 205 to 225; sequence IMKCFSGISLAVEIVYGVTLW.

The protein belongs to the paxB family.

It is found in the membrane. The enzyme catalyses verruculide C epoxide = 3-hydroxypentacecilide A. Its pathway is secondary metabolite biosynthesis; terpenoid biosynthesis. Its function is as follows. Terpene cyclase; part of the gene cluster that mediates the biosynthesis of chrodrimanin B, a meroterpenoid that acts as a potent blocker of insect GABA-gated chloride channels. The first step of the pathway is the biosynthesis of 6-hydroxymellein by the polyketide synthase cdmE. The prenyltransferase cdmH acts as a 6-hydroxymellein 5-farnesyltransferase and produces the hydrophobic metabolite verruculide C. The FAD-dependent monooxygenase cdmI further converts verruculide C into verruculide B. The terpene cyclase cdmG then produced the pentacyclic molecule 3-hydroxypentacecilide A, the backbone structure of chrodrimanin B, via folding the farnesyl moiety of the substrate into the chair-boat conformation. The short-chain dehydrogenase/reductase cdmF functions as the 3-OH dehydrogenase that oxidizes the C-3 hydroxyl group of 3-hydroxypentacecilide A and produces chrodrimanin C, the dehydrogenated product of 3-hydroxypentacecilide A. The cytochrome P450 monooxygenase cdmJ then accepts both 3-hydroxypentacecilide A and chrodrimanin C and functions as a C-7-beta-hydroxylase to produce respectively chrodrimanin H and chrodrimanin F. The dioxygenase cdmA accepts chrodrimanin H to afford chrodrimanin E, which is further transformed to chrodrimanin A by the dioxygenase cdmD. CdmA can also accept chrodrimanin C as substrate to convert it into verruculide A, which is further converted into chrodrimanin T by cdmD. The last step of the biosynthesis is proposed to be performed by the acetyltransferase cdmC which acetylates chrodrimanin A to yield chrodrimanin B. The pathway may also lead to the production of additional shunt products, including chrodrimanins T and U. In Talaromyces verruculosus (Penicillium verruculosum), this protein is Terpene cyclase cdmG.